A 572-amino-acid chain; its full sequence is Proline--tRNA ligase (572 aa).

The protein belongs to the class-II aminoacyl-tRNA synthetase family. ProS type 1 subfamily. In terms of assembly, homodimer.

The protein localises to the cytoplasm. It carries out the reaction tRNA(Pro) + L-proline + ATP = L-prolyl-tRNA(Pro) + AMP + diphosphate. Functionally, catalyzes the attachment of proline to tRNA(Pro) in a two-step reaction: proline is first activated by ATP to form Pro-AMP and then transferred to the acceptor end of tRNA(Pro). As ProRS can inadvertently accommodate and process non-cognate amino acids such as alanine and cysteine, to avoid such errors it has two additional distinct editing activities against alanine. One activity is designated as 'pretransfer' editing and involves the tRNA(Pro)-independent hydrolysis of activated Ala-AMP. The other activity is designated 'posttransfer' editing and involves deacylation of mischarged Ala-tRNA(Pro). The misacylated Cys-tRNA(Pro) is not edited by ProRS. The chain is Proline--tRNA ligase from Escherichia coli O127:H6 (strain E2348/69 / EPEC).